We begin with the raw amino-acid sequence, 376 residues long: 23S rRNA (uracil(747)-C(5))-methyltransferase RlmC (376 aa).

Residues cysteine 3, cysteine 11, cysteine 14, and cysteine 88 each coordinate [4Fe-4S] cluster. Residues glutamine 213, phenylalanine 242, glutamate 263, and asparagine 308 each coordinate S-adenosyl-L-methionine. Cysteine 335 functions as the Nucleophile in the catalytic mechanism.

The protein belongs to the class I-like SAM-binding methyltransferase superfamily. RNA M5U methyltransferase family. RlmC subfamily.

It catalyses the reaction uridine(747) in 23S rRNA + S-adenosyl-L-methionine = 5-methyluridine(747) in 23S rRNA + S-adenosyl-L-homocysteine + H(+). Its function is as follows. Catalyzes the formation of 5-methyl-uridine at position 747 (m5U747) in 23S rRNA. The chain is 23S rRNA (uracil(747)-C(5))-methyltransferase RlmC from Vibrio vulnificus (strain CMCP6).